A 313-amino-acid chain; its full sequence is Porphobilinogen deaminase 2 (313 aa).

S-(dipyrrolylmethanemethyl)cysteine is present on C246.

The protein belongs to the HMBS family. As to quaternary structure, monomer. Dipyrromethane serves as cofactor.

It catalyses the reaction 4 porphobilinogen + H2O = hydroxymethylbilane + 4 NH4(+). Its pathway is porphyrin-containing compound metabolism; protoporphyrin-IX biosynthesis; coproporphyrinogen-III from 5-aminolevulinate: step 2/4. In terms of biological role, tetrapolymerization of the monopyrrole PBG into the hydroxymethylbilane pre-uroporphyrinogen in several discrete steps. In Streptomyces coelicolor (strain ATCC BAA-471 / A3(2) / M145), this protein is Porphobilinogen deaminase 2 (hemC2).